The sequence spans 261 residues: Carnitinyl-CoA dehydratase (261 aa).

Catalysis depends on Glu111, which acts as the Nucleophile. Glu131 acts as the Proton acceptor in catalysis.

It belongs to the enoyl-CoA hydratase/isomerase family.

It carries out the reaction (R)-carnitinyl-CoA = crotonobetainyl-CoA + H2O. It participates in amine and polyamine metabolism; carnitine metabolism. Its function is as follows. Catalyzes the reversible dehydration of L-carnitinyl-CoA to crotonobetainyl-CoA. This Salmonella arizonae (strain ATCC BAA-731 / CDC346-86 / RSK2980) protein is Carnitinyl-CoA dehydratase.